Here is a 558-residue protein sequence, read N- to C-terminus: FRIGIDA-like protein 3 (558 aa).

The stretch at 9–102 forms a coiled coil; it reads SLMDSTSSKI…ALERLQKKRD (94 aa). The segment covering 454 to 463 has biased composition (basic and acidic residues); the sequence is AKADKKRATE. A disordered region spans residues 454-494; it reads AKADKKRATEPMKPQPKRPRGAQPRVTDNNNNINNNKTGYG.

The protein belongs to the Frigida family.

In Arabidopsis thaliana (Mouse-ear cress), this protein is FRIGIDA-like protein 3 (FRL3).